The following is a 238-amino-acid chain: MADS-box protein 04g005320 (238 aa).

An MADS-box domain is found at 1 to 61 (MGRGKVELKR…GKLYEFCSTS (61 aa)). The region spanning 87 to 177 (SQNNYQEYMK…KTKLEENSVA (91 aa)) is the K-box domain.

Its subcellular location is the nucleus. Probable MADS-box transcription factor that functions with J2 and EJ2 in meristem maturation. In Solanum lycopersicum (Tomato), this protein is MADS-box protein 04g005320.